Consider the following 499-residue polypeptide: Flotillin-like protein 2 (499 aa).

Cys37 is lipidated: S-palmitoyl cysteine. Positions 243 to 319 (LREEAKVKAE…LRLTEKLKAE (77 aa)) form a coiled coil.

It belongs to the band 7/mec-2 family. Flotillin subfamily. Post-translationally, may be palmitoylated.

It is found in the cell membrane. The protein resides in the membrane. The protein localises to the caveola. In terms of biological role, may act as a scaffolding protein within caveolar membranes, functionally participating in formation of caveolae or caveolae-like vesicles. This is Flotillin-like protein 2 (FLOT2) from Oryza sativa subsp. japonica (Rice).